The following is a 248-amino-acid chain: Granzyme F (248 aa).

An N-terminal signal peptide occupies residues 1 to 18 (MPPILILLTLLLPLRAGA). Residues 19–20 (EE) constitute a propeptide that is removed on maturation. A Peptidase S1 domain is found at 21–246 (IIGGHEVKPH…YLPWISRNMK (226 aa)). A disulfide bridge connects residues C50 and C66. The Charge relay system role is filled by H65. N-linked (GlcNAc...) asparagine glycosylation occurs at N106. Residue D109 is the Charge relay system of the active site. 2 cysteine pairs are disulfide-bonded: C143/C210 and C175/C189. N154 carries N-linked (GlcNAc...) asparagine glycosylation. The Charge relay system role is filled by S204. Residue N223 is glycosylated (N-linked (GlcNAc...) asparagine).

Belongs to the peptidase S1 family. Granzyme subfamily.

Its subcellular location is the cytolytic granule. This enzyme is probably necessary for target cell lysis in cell-mediated immune responses. In Mus musculus (Mouse), this protein is Granzyme F (Gzmf).